A 138-amino-acid polypeptide reads, in one-letter code: MCWGRSWTFGRSSSKGWRPTSSASSYDEHRADLSTLADEMVDLASQGRDGLEVDRAFHLKLMEPLGNDLILQLTEAFWQVQAIVAPTLRTEPEDRLITAQRHRAIVDAATAGDPEALRSAIADHYAPIRTSIARAVQS.

The interval 1–25 is disordered; sequence MCWGRSWTFGRSSSKGWRPTSSASS. Polar residues predominate over residues 9–25; the sequence is FGRSSSKGWRPTSSASS.

In terms of biological role, may serve as a transcriptional regulator. This Micromonospora viridifaciens protein is Putative transcriptional regulatory protein NedR (nedR).